The chain runs to 182 residues: U1 small nuclear ribonucleoprotein C (182 aa).

The Matrin-type zinc finger occupies 4 to 36 (YLCDYCQVWLTHDSQSVRKAHNAGRAHIQNVQD). The segment at 129-182 (PQTTASSNTQLTQQQQSLPQTNEHQRARTHSNANNHFTKTHHQGQRSHQRFVRA) is disordered. Over residues 130–150 (QTTASSNTQLTQQQQSLPQTN) the composition is skewed to low complexity. A compositionally biased stretch (basic residues) spans 166 to 182 (TKTHHQGQRSHQRFVRA).

This sequence belongs to the U1 small nuclear ribonucleoprotein C family. As to quaternary structure, U1 snRNP is composed of the 7 core Sm proteins smb1, smd1, smd2, smd3, sme1, smf1 and smg1 (Sm proteins B, D1, D2, D3, E, F and G, respectively) that assemble in a heptameric protein ring on the Sm site of the small nuclear RNA to form the core snRNP, and at least 9 U1 snRNP-specific proteins usp101/U1-70K, usp102/U1-A, usp103/U1-C, usp106/LUC7, usp105/PRP39, usp104/PRP40, usp107/U1-H, usp108/U1-J and usp109/U1-L. usp103/U1-C interacts with U1 snRNA and the 5' splice-site region of the pre-mRNA.

It localises to the nucleus. Functionally, component of the spliceosomal U1 snRNP, which is essential for recognition of the pre-mRNA 5' splice-site and the subsequent assembly of the spliceosome. usp103/U1-C is directly involved in initial 5' splice-site recognition for both constitutive and regulated alternative splicing. The interaction with the 5' splice-site seems to precede base-pairing between the pre-mRNA and the U1 snRNA. Stimulates commitment or early (E) complex formation by stabilizing the base pairing of the 5' end of the U1 snRNA and the 5' splice-site region. This Schizosaccharomyces pombe (strain 972 / ATCC 24843) (Fission yeast) protein is U1 small nuclear ribonucleoprotein C (usp103).